The following is a 59-amino-acid chain: Thrombostatin (59 aa).

Intrachain disulfides connect C3-C22, C17-C37, C39-C51, and C52-C57. Positions 43-45 (RGD) match the Cell attachment site motif.

This sequence belongs to the three-finger toxin family. Short-chain subfamily. Antiplatelet toxin sub-subfamily. In terms of tissue distribution, expressed by the venom gland.

The protein resides in the secreted. Inhibits ADP-induced platelet aggregation and inhibits the binding of purified platelet fibrinogen receptor alpha-IIb/beta-3 (ITGA2B/ITGB3) to immobilized fibrinogen. This is Thrombostatin from Dendroaspis angusticeps (Eastern green mamba).